The primary structure comprises 103 residues: MLFFTGLVILSYLLGGKKDWLLIMYEASDYLEFLNRLSSMLFKFELFEHLSSTFLIFSHSKRAVKLLEIYRSRHISIYNVFLLRHPKYFQSVDIALYLTRSQT.

This is an uncharacterized protein from Saccharomyces cerevisiae (strain ATCC 204508 / S288c) (Baker's yeast).